The primary structure comprises 157 residues: Molybdopterin synthase catalytic subunit (157 aa).

Substrate-binding positions include 103 to 104 (HR), K119, and 126 to 128 (KKE).

The protein belongs to the MoaE family. MOCS2B subfamily. As to quaternary structure, heterotetramer; composed of 2 small (MOCS2A) and 2 large (MOCS2B) subunits.

It localises to the cytoplasm. The enzyme catalyses 2 [molybdopterin-synthase sulfur-carrier protein]-C-terminal-Gly-aminoethanethioate + cyclic pyranopterin phosphate + H2O = molybdopterin + 2 [molybdopterin-synthase sulfur-carrier protein]-C-terminal Gly-Gly + 2 H(+). It participates in cofactor biosynthesis; molybdopterin biosynthesis. In terms of biological role, catalytic subunit of the molybdopterin synthase complex, a complex that catalyzes the conversion of precursor Z into molybdopterin. Acts by mediating the incorporation of 2 sulfur atoms from thiocarboxylated MOCS2A into precursor Z to generate a dithiolene group. This Culex quinquefasciatus (Southern house mosquito) protein is Molybdopterin synthase catalytic subunit.